A 224-amino-acid chain; its full sequence is Pre-hexon-linking protein VIII (224 aa).

At threonine 64 the chain carries Phosphothreonine; by host. Positions 112–154 are excised as a propeptide; the sequence is RQLCPSQIGIKSPVLAGTGIQLSEDIPSASWIRPDGIFQLGGG.

It belongs to the adenoviridae hexon-linking protein family. In terms of assembly, interacts with the peripentonal hexons as well as the hexons in the facets. Part of a complex composed of the core-capsid bridging protein, the endosome lysis protein VI and the hexon-linking protein VIII; these interactions bridge the virus core to the capsid. Post-translationally, cleaved by the viral protease during virion maturation. May cause the middle segment to be shed from the capsid.

It localises to the virion. Its subcellular location is the host nucleus. Its function is as follows. Structural component of the virion that acts as a cement protein on the capsid interior and which glue the peripentonal hexons and group-of-nine hexons together. The sequence is that of Pre-hexon-linking protein VIII from Canis lupus familiaris (Dog).